The primary structure comprises 130 residues: Tripartite terminase subunit 2 (130 aa).

It belongs to the herpesviridae TRM2 protein family. In terms of assembly, associates with TRM1 and TRM3 to form the tripartite terminase complex.

The protein resides in the host nucleus. In terms of biological role, component of the molecular motor that translocates viral genomic DNA in empty capsid during DNA packaging. Forms a tripartite terminase complex together with TRM1 and TRM3 in the host cytoplasm. Once the complex reaches the host nucleus, it interacts with the capsid portal vertex. This portal forms a ring in which genomic DNA is translocated into the capsid. This Homo sapiens (Human) protein is Tripartite terminase subunit 2.